The primary structure comprises 150 residues: 3-dehydroquinate dehydratase (150 aa).

Y26 functions as the Proton acceptor in the catalytic mechanism. Substrate is bound by residues N77, H83, and D90. H103 functions as the Proton donor in the catalytic mechanism. Substrate-binding positions include 104-105 (LS) and R114.

Belongs to the type-II 3-dehydroquinase family. As to quaternary structure, homododecamer.

The catalysed reaction is 3-dehydroquinate = 3-dehydroshikimate + H2O. It participates in metabolic intermediate biosynthesis; chorismate biosynthesis; chorismate from D-erythrose 4-phosphate and phosphoenolpyruvate: step 3/7. Functionally, catalyzes a trans-dehydration via an enolate intermediate. The chain is 3-dehydroquinate dehydratase from Klebsiella pneumoniae (strain 342).